The following is a 32-amino-acid chain: MSDIN-like toxin proprotein 1 (32 aa).

A propeptide spanning residues 1–10 (MSDINVTRLP) is cleaved from the precursor. A cross-link (cyclopeptide (Gly-Pro)) is located at residues 11-18 (GFVPILFP). Positions 19 to 32 (CVGDDVNTALTRGE) are excised as a propeptide.

It belongs to the MSDIN fungal toxin family. Processed by the macrocyclase-peptidase enzyme POPB to yield a toxic cyclic octapeptide. POPB first removes 10 residues from the N-terminus. Conformational trapping of the remaining peptide forces the enzyme to release this intermediate rather than proceed to macrocyclization. The enzyme rebinds the remaining peptide in a different conformation and catalyzes macrocyclization of the N-terminal 8 residues.

Its function is as follows. Probable toxin that belongs to the MSDIN-like toxin family responsible for a large number of food poisoning cases and deaths. This is MSDIN-like toxin proprotein 1 from Amanita bisporigera (Destroying angel).